A 340-amino-acid chain; its full sequence is Guanine nucleotide-binding protein subunit beta-4 (340 aa).

An N-acetylserine modification is found at Ser-2. Position 2 is a phosphoserine (Ser-2). 5 WD repeats span residues 53–92 (GHLA…KMHA), 95–134 (LRSS…GNVR), 141–179 (GHTG…QTTT), 182–221 (GHSG…CRQS), and 224–263 (GHVS…ELLL). Phosphohistidine is present on His-266. WD repeat units follow at residues 268-307 (NIIC…RAGV) and 310-339 (GHDN…LRIW).

It belongs to the WD repeat G protein beta family. In terms of assembly, g proteins are composed of 3 units, alpha, beta and gamma. Strongly expressed in lung and placenta, whereas it is weakly expressed in brain and heart. Abundantly expressed in the axons and Schwann cells of peripheral nerves.

In terms of biological role, guanine nucleotide-binding proteins (G proteins) are involved as a modulator or transducer in various transmembrane signaling systems. The beta and gamma chains are required for the GTPase activity, for replacement of GDP by GTP, and for G protein-effector interaction. This chain is Guanine nucleotide-binding protein subunit beta-4 (GNB4), found in Homo sapiens (Human).